A 1557-amino-acid chain; its full sequence is ABC transporter atnG (1557 aa).

Transmembrane regions (helical) follow at residues 27-47, 70-90, 99-119, 131-151, and 159-179; these read FTLYFEEAFLSIFPAATLILA, LKLLLLAPYSISQLLLLAFWM, LTIASTVLRFIATLPCGYLIH, IISIYFLLTLLFDIPLARTIW, and VSAIFIAGTVVKALLLILETW. N-linked (GlcNAc...) asparagine glycans are attached at residues Asn202 and Asn249. 6 helical membrane passes run 256–276, 311–331, 385–405, 412–432, 490–510, and 531–551; these read AGAMVVPIAKAFKWDLLAGVF, ATLLIGAYALVYGGIAIATAT, YIHDTWASLIEIGIALYLLYN, IAPIIIAFGCTVTAMKIAMMA, LLIAVVGLSNFNTLMTPIVSF, and LTSLTLFNLFAVFIGTLVESI. The ABC transmembrane type-1 1 domain occupies 279-556; sequence LCQSGFIISQ…LVESISETAM (278 aa). Positions 593–829 constitute an ABC transporter 1 domain; the sequence is AFEVDVGWKN…LDYIQGFAIA (237 aa). 625–632 serves as a coordination point for ATP; sequence GAVGCGKT. An N-linked (GlcNAc...) asparagine glycan is attached at Asn667. The chain crosses the membrane as a helical span at residues 882–902; the sequence is LVYFGLMAIFVFLQAFPTVWV. Residues 882–1162 form the ABC transmembrane type-1 2 domain; sequence LVYFGLMAIF…LITDWTVLET (281 aa). N-linked (GlcNAc...) asparagine glycosylation is present at Asn916. Transmembrane regions (helical) follow at residues 921-941, 996-1016, 1020-1040, and 1105-1125; these read IGVYWMFGVLGACFLLATACF, AVLQTCLALFLCVAQLIIIAV, YITATIPLCVLVYCIIGTFYM, and LSLVLDMTVAGFVLVLMGIAV. An N-linked (GlcNAc...) asparagine glycan is attached at Asn1132. Residues 1135–1155 form a helical membrane-spanning segment; that stretch reads SLGLALVNVVSLSASVKALIT. One can recognise an ABC transporter 2 domain in the interval 1199 to 1431; the sequence is VEYKNVSAFY…PSVFRELYKS (233 aa). Residues Asn1203 and Asn1218 are each glycosylated (N-linked (GlcNAc...) asparagine). 1233–1240 contributes to the ATP binding site; the sequence is GRSGSGKS. 2 disordered regions span residues 1439–1464 and 1503–1557; these read ERQERAEAEARRRERVEKERAEEELR and RTRS…RGLH. Basic and acidic residues predominate over residues 1507-1522; that stretch reads RSRDHSAERRESKRYS.

It belongs to the ABC transporter superfamily. ABCC family. Conjugate transporter (TC 3.A.1.208) subfamily.

The protein resides in the cell membrane. In terms of biological role, ABC transporter; part of the gene cluster that mediates the biosynthesis of aspercryptins, linear lipopeptides built from six amino acids including 2 highly unusual and nonproteogenic amino acids, 2-amino-octanoic acid (2aoa) and 2-amino-dodecanol (2adol). The polypeptide is ABC transporter atnG (Emericella nidulans (strain FGSC A4 / ATCC 38163 / CBS 112.46 / NRRL 194 / M139) (Aspergillus nidulans)).